The sequence spans 473 residues: Probable cytosolic iron-sulfur protein assembly protein 1 (473 aa).

The interval 1-25 is disordered; it reads MPSSTPGGSLKHLSDLTPPSQDRTW. WD repeat units follow at residues 11 to 58 and 62 to 104; these read KHLS…LLST and GHKR…GRAE. A disordered region spans residues 112-133; that stretch reads GGLAEADRQEGDDTDGDEEDED. The segment covering 123 to 133 has biased composition (acidic residues); sequence DDTDGDEEDED. WD repeat units follow at residues 144–183, 191–230, 235–313, and 341–380; these read GHDSEVKSVSWSSGGSLLATCSRDKSIWIWEDLEDGDNNF, EHSGDVKWVAWHPEEECLASGSYDDTIRLWREDVDDWGQV, GHEG…KPPP, and MHDLSIYSVAWSKKTGLIASTGADGRIVIYQERFTSKPPV. The interval 377–405 is disordered; that stretch reads KPPVHTTSEQDKPDSARETQKANGERTAP. The segment covering 384 to 400 has biased composition (basic and acidic residues); sequence SEQDKPDSARETQKANG. The WD 7 repeat unit spans residues 438–473; sequence SQQQNFDNSEMDHANEEEVLLSTGDDGVVRVWTLER.

The protein belongs to the WD repeat CIA1 family.

Its function is as follows. Essential component of the cytosolic iron-sulfur (Fe/S) protein assembly machinery. Required for the maturation of extramitochondrial Fe/S proteins. This Coccidioides immitis (strain RS) (Valley fever fungus) protein is Probable cytosolic iron-sulfur protein assembly protein 1.